The sequence spans 433 residues: Enolase (433 aa).

Gln-163 serves as a coordination point for (2R)-2-phosphoglycerate. The Proton donor role is filled by Glu-205. Mg(2+) contacts are provided by Asp-242, Glu-291, and Asp-318. (2R)-2-phosphoglycerate is bound by residues Lys-343, Arg-372, Ser-373, and Lys-394. Lys-343 (proton acceptor) is an active-site residue.

Belongs to the enolase family. Requires Mg(2+) as cofactor.

Its subcellular location is the cytoplasm. It localises to the secreted. The protein resides in the cell surface. It catalyses the reaction (2R)-2-phosphoglycerate = phosphoenolpyruvate + H2O. It functions in the pathway carbohydrate degradation; glycolysis; pyruvate from D-glyceraldehyde 3-phosphate: step 4/5. Catalyzes the reversible conversion of 2-phosphoglycerate (2-PG) into phosphoenolpyruvate (PEP). It is essential for the degradation of carbohydrates via glycolysis. The protein is Enolase of Methylibium petroleiphilum (strain ATCC BAA-1232 / LMG 22953 / PM1).